A 237-amino-acid polypeptide reads, in one-letter code: Protein GrpE (237 aa).

Disordered regions lie at residues 1–52 (MSGD…RLQQ) and 200–237 (KVSM…EPGV). The span at 27 to 40 (ASMNSDEGQPSAQS) shows a compositional bias: polar residues. The segment covering 204 to 218 (GPGPQSGASPSSAQS) has biased composition (low complexity).

Belongs to the GrpE family. Homodimer.

The protein resides in the cytoplasm. Functionally, participates actively in the response to hyperosmotic and heat shock by preventing the aggregation of stress-denatured proteins, in association with DnaK and GrpE. It is the nucleotide exchange factor for DnaK and may function as a thermosensor. Unfolded proteins bind initially to DnaJ; upon interaction with the DnaJ-bound protein, DnaK hydrolyzes its bound ATP, resulting in the formation of a stable complex. GrpE releases ADP from DnaK; ATP binding to DnaK triggers the release of the substrate protein, thus completing the reaction cycle. Several rounds of ATP-dependent interactions between DnaJ, DnaK and GrpE are required for fully efficient folding. This is Protein GrpE from Prochlorococcus marinus (strain MIT 9303).